The primary structure comprises 464 residues: UDP-N-acetylmuramoylalanine--D-glutamate ligase (464 aa).

112 to 118 (GTDGKTT) is a binding site for ATP.

This sequence belongs to the MurCDEF family.

It is found in the cytoplasm. The enzyme catalyses UDP-N-acetyl-alpha-D-muramoyl-L-alanine + D-glutamate + ATP = UDP-N-acetyl-alpha-D-muramoyl-L-alanyl-D-glutamate + ADP + phosphate + H(+). Its pathway is cell wall biogenesis; peptidoglycan biosynthesis. Its function is as follows. Cell wall formation. Catalyzes the addition of glutamate to the nucleotide precursor UDP-N-acetylmuramoyl-L-alanine (UMA). The polypeptide is UDP-N-acetylmuramoylalanine--D-glutamate ligase (Chlorobium chlorochromatii (strain CaD3)).